The chain runs to 262 residues: MALGLRCFRLVHPAFCNSLAALTRPVSEVTLQTVRGRQNDHGQCMAYAAVPVRHFATKKAKAKGKGQSQTRMNLNTALVEDIINLEEVDEEMKSVIEALKDNFNKTVNIRTSPGALDNITVVTADGKLPLNQISQISMKSPQLILVNMASFPECTAAAIKAIRESGMNLNPEVEGTLIRVPIPKVTREHREMLVKLAKQNTNKAKDSLRKVRTNAINKVKKSKDKASEDTIRLIEKQISQMADDTVAELDRHLAVKTKELLG.

The transit peptide at 1–55 (MALGLRCFRLVHPAFCNSLAALTRPVSEVTLQTVRGRQNDHGQCMAYAAVPVRHF) directs the protein to the mitochondrion.

Belongs to the RRF family.

It localises to the mitochondrion. Its function is as follows. Responsible for the disassembly of ribosomes from messenger RNA at the termination of mitochondrial protein biosynthesis. Acts in collaboration with GFM2. Promotes mitochondrial ribosome recycling by dissolution of intersubunit contacts. This chain is Ribosome-recycling factor, mitochondrial (MRRF), found in Bos taurus (Bovine).